The chain runs to 619 residues: 1-deoxy-D-xylulose-5-phosphate synthase (619 aa).

Thiamine diphosphate is bound by residues His-74 and 115–117 (GHS). Asp-146 is a Mg(2+) binding site. Residues 147–148 (GA), Asn-175, Tyr-285, and Glu-365 contribute to the thiamine diphosphate site. Residue Asn-175 coordinates Mg(2+).

This sequence belongs to the transketolase family. DXPS subfamily. Homodimer. It depends on Mg(2+) as a cofactor. The cofactor is thiamine diphosphate.

The catalysed reaction is D-glyceraldehyde 3-phosphate + pyruvate + H(+) = 1-deoxy-D-xylulose 5-phosphate + CO2. Its pathway is metabolic intermediate biosynthesis; 1-deoxy-D-xylulose 5-phosphate biosynthesis; 1-deoxy-D-xylulose 5-phosphate from D-glyceraldehyde 3-phosphate and pyruvate: step 1/1. Catalyzes the acyloin condensation reaction between C atoms 2 and 3 of pyruvate and glyceraldehyde 3-phosphate to yield 1-deoxy-D-xylulose-5-phosphate (DXP). In Clostridium perfringens (strain 13 / Type A), this protein is 1-deoxy-D-xylulose-5-phosphate synthase.